Here is an 871-residue protein sequence, read N- to C-terminus: Chaperone protein ClpB 1 (871 aa).

The Clp R domain maps to 6 to 147 (PNQFTEKAWA…REAIQQIRGS (142 aa)). Repeat stretches follow at residues 9–73 (FTEK…ISRQ) and 84–147 (LGQS…IRGS). The interval 160 to 341 (AALEKYGRDL…RRFQQVYVDQ (182 aa)) is NBD1. ATP is bound at residue 207 to 214 (GEPGVGKT). Positions 342-550 (PSVEDTISIL…IAEIISKWTG (209 aa)) are linker. The stretch at 392-526 (IDLVDEAAAK…AEAKLREIQV (135 aa)) forms a coiled coil. Positions 560 to 771 (EAQKLLHLEE…RVDEFIIFHS (212 aa)) are NBD2. 610–617 (GPTGVGKT) lines the ATP pocket. A C-terminal region spans residues 772–871 (LRKDQLRQIV…FRRQVELATV (100 aa)).

This sequence belongs to the ClpA/ClpB family. As to quaternary structure, homohexamer. The oligomerization is ATP-dependent.

It localises to the cytoplasm. In terms of biological role, part of a stress-induced multi-chaperone system, it is involved in the recovery of the cell from heat-induced damage, in cooperation with DnaK, DnaJ and GrpE. Acts before DnaK, in the processing of protein aggregates. Protein binding stimulates the ATPase activity; ATP hydrolysis unfolds the denatured protein aggregates, which probably helps expose new hydrophobic binding sites on the surface of ClpB-bound aggregates, contributing to the solubilization and refolding of denatured protein aggregates by DnaK. This Thermosynechococcus vestitus (strain NIES-2133 / IAM M-273 / BP-1) protein is Chaperone protein ClpB 1 (clpB1).